The sequence spans 55 residues: Large ribosomal subunit protein bL33 (55 aa).

This sequence belongs to the bacterial ribosomal protein bL33 family. As to quaternary structure, part of the 50S ribosomal subunit. Contacts protein L35.

In terms of biological role, binds the 23S rRNA and the E site tRNA. The protein is Large ribosomal subunit protein bL33 (rpmG) of Deinococcus radiodurans (strain ATCC 13939 / DSM 20539 / JCM 16871 / CCUG 27074 / LMG 4051 / NBRC 15346 / NCIMB 9279 / VKM B-1422 / R1).